The chain runs to 89 residues: MFVVHTIYENEGNTTRDYGHVNQFFRCNPEFRAQKDERIFKKCVEQGFIYIKHWMQGNKVRTTYHRSLTELNDELIYNRAVNQTLKDEQ.

This is an uncharacterized protein from Escherichia coli (Bacteriophage T4).